The following is a 505-amino-acid chain: Catalase (505 aa).

The disordered stretch occupies residues 1-25 (MSRQDKKLTGVFGHPVSDRENSMTA). Residues His-56 and Asn-129 contribute to the active site. Tyr-339 contacts heme.

It belongs to the catalase family. Homodimer. Heme serves as cofactor.

The enzyme catalyses 2 H2O2 = O2 + 2 H2O. Its function is as follows. Decomposes hydrogen peroxide into water and oxygen; serves to protect cells from the toxic effects of hydrogen peroxide. The chain is Catalase (katA) from Staphylococcus aureus (strain MRSA252).